The primary structure comprises 284 residues: Shikimate dehydrogenase (NADP(+)) (284 aa).

Shikimate contacts are provided by residues 20–22 (SIS) and S67. K71 functions as the Proton acceptor in the catalytic mechanism. D83 lines the NADP(+) pocket. Residues N92 and D107 each contribute to the shikimate site. Residues 129-133 (GAGGA) and I227 contribute to the NADP(+) site. Y229 contacts shikimate. Position 250 (G250) interacts with NADP(+).

The protein belongs to the shikimate dehydrogenase family. Homodimer.

It carries out the reaction shikimate + NADP(+) = 3-dehydroshikimate + NADPH + H(+). It participates in metabolic intermediate biosynthesis; chorismate biosynthesis; chorismate from D-erythrose 4-phosphate and phosphoenolpyruvate: step 4/7. Its function is as follows. Involved in the biosynthesis of the chorismate, which leads to the biosynthesis of aromatic amino acids. Catalyzes the reversible NADPH linked reduction of 3-dehydroshikimate (DHSA) to yield shikimate (SA). This is Shikimate dehydrogenase (NADP(+)) from Streptococcus pneumoniae (strain P1031).